Here is a 512-residue protein sequence, read N- to C-terminus: Probable cytosol aminopeptidase (512 aa).

The Mn(2+) site is built by Lys-284 and Asp-289. Lys-296 is an active-site residue. Mn(2+)-binding residues include Asp-307, Asp-366, and Glu-368. The active site involves Arg-370.

The protein belongs to the peptidase M17 family. Requires Mn(2+) as cofactor.

It localises to the cytoplasm. It catalyses the reaction Release of an N-terminal amino acid, Xaa-|-Yaa-, in which Xaa is preferably Leu, but may be other amino acids including Pro although not Arg or Lys, and Yaa may be Pro. Amino acid amides and methyl esters are also readily hydrolyzed, but rates on arylamides are exceedingly low.. The catalysed reaction is Release of an N-terminal amino acid, preferentially leucine, but not glutamic or aspartic acids.. Its function is as follows. Presumably involved in the processing and regular turnover of intracellular proteins. Catalyzes the removal of unsubstituted N-terminal amino acids from various peptides. In Cupriavidus necator (strain ATCC 17699 / DSM 428 / KCTC 22496 / NCIMB 10442 / H16 / Stanier 337) (Ralstonia eutropha), this protein is Probable cytosol aminopeptidase.